Reading from the N-terminus, the 358-residue chain is Aurora kinase (358 aa).

The segment at Met-1–Lys-49 is disordered. A compositionally biased stretch (polar residues) spans Ser-20–Pro-35. The region spanning Phe-100–Trp-358 is the Protein kinase domain. ATP-binding positions include Leu-106–Val-114 and Lys-129. Catalysis depends on Asp-223, which acts as the Proton acceptor.

It belongs to the protein kinase superfamily. Ser/Thr protein kinase family. Aurora subfamily.

The protein localises to the nucleus. It is found in the cytoplasm. Its subcellular location is the cytoskeleton. It localises to the spindle. The protein resides in the chromosome. The protein localises to the centromere. It is found in the kinetochore. It carries out the reaction L-seryl-[protein] + ATP = O-phospho-L-seryl-[protein] + ADP + H(+). It catalyses the reaction L-threonyl-[protein] + ATP = O-phospho-L-threonyl-[protein] + ADP + H(+). Functionally, component of the chromosomal passenger complex (CPC), a complex that acts as a key regulator of chromosome segregation and cytokinesis. Has a role in error-correction of aberrent kinetochore-microtubule attachments to ensure that sister kinetochores become bioriented and connect to opposite poles by promoting spindle assembly checkpoint signaling. The protein is Aurora kinase (IPL1) of Candida glabrata (strain ATCC 2001 / BCRC 20586 / JCM 3761 / NBRC 0622 / NRRL Y-65 / CBS 138) (Yeast).